The sequence spans 133 residues: MHFMKRKHPCRIRKRADFLAVRTGEKRRGPLFLLEVKSREQTAGIKSPLVARVGFTVTRKNGNAVKRNRIKRRLREAVRVGLTDDIEAGTDYVIVAHSDALHAPFTFLISELSRRIKPKTKHQKRQQGNMNGI.

This sequence belongs to the RnpA family. Consists of a catalytic RNA component (M1 or rnpB) and a protein subunit.

It catalyses the reaction Endonucleolytic cleavage of RNA, removing 5'-extranucleotides from tRNA precursor.. RNaseP catalyzes the removal of the 5'-leader sequence from pre-tRNA to produce the mature 5'-terminus. It can also cleave other RNA substrates such as 4.5S RNA. The protein component plays an auxiliary but essential role in vivo by binding to the 5'-leader sequence and broadening the substrate specificity of the ribozyme. The polypeptide is Ribonuclease P protein component (Bartonella quintana (strain Toulouse) (Rochalimaea quintana)).